The primary structure comprises 405 residues: Dynactin subunit 2 (405 aa).

Residues 1–25 (MADPKYADLPGIARNEPDVYETSDL) are disordered. Alanine 2 is subject to N-acetylalanine. Tyrosine 6 bears the Phosphotyrosine mark. Serine 85 carries the phosphoserine modification. Position 88 is a phosphotyrosine (tyrosine 88). Residues 105–132 (YQRLLHEVQELTTEVEKIKMTVKESATE) are a coiled coil. The residue at position 136 (threonine 136) is a Phosphothreonine. Residues 187 to 207 (KNTKGAGSGGKTTSGSPPDSS) form a disordered region. Serine 324 carries the post-translational modification Phosphoserine.

This sequence belongs to the dynactin subunit 2 family. Subunit of dynactin, a multiprotein complex part of a tripartite complex with dynein and a adapter, such as BICDL1, BICD2 or HOOK3. The dynactin complex is built around ACTR1A/ACTB filament and consists of an actin-related filament composed of a shoulder domain, a pointed end and a barbed end. Its length is defined by its flexible shoulder domain. The soulder is composed of 2 DCTN1 subunits, 4 DCTN2 and 2 DCTN3. The 4 DCNT2 (via N-terminus) bind the ACTR1A filament and act as molecular rulers to determine the length. The pointed end is important for binding dynein-dynactin cargo adapters and consists of 4 subunits: ACTR10, DCNT4, DCTN5 and DCTN6. The barbed end is composed of a CAPZA1:CAPZB heterodimers, which binds ACTR1A/ACTB filament and dynactin and stabilizes dynactin. Interacts with BICD2 and CEP135. Interacts with DYNAP. Interacts with ECPAS. Interacts with MAPRE1.

It is found in the cytoplasm. The protein resides in the cytoskeleton. It localises to the microtubule organizing center. The protein localises to the centrosome. Its subcellular location is the membrane. In terms of biological role, part of the dynactin complex that activates the molecular motor dynein for ultra-processive transport along microtubules. In the dynactin soulder domain, binds the ACTR1A filament and acts as a molecular ruler to determine the length. Modulates cytoplasmic dynein binding to an organelle, and plays a role in prometaphase chromosome alignment and spindle organization during mitosis. Involved in anchoring microtubules to centrosomes. May play a role in synapse formation during brain development. The chain is Dynactin subunit 2 (DCTN2) from Sus scrofa (Pig).